The following is a 349-amino-acid chain: UDP-3-O-acylglucosamine N-acyltransferase (349 aa).

Catalysis depends on histidine 240, which acts as the Proton acceptor.

Belongs to the transferase hexapeptide repeat family. LpxD subfamily. In terms of assembly, homotrimer.

It carries out the reaction a UDP-3-O-[(3R)-3-hydroxyacyl]-alpha-D-glucosamine + a (3R)-hydroxyacyl-[ACP] = a UDP-2-N,3-O-bis[(3R)-3-hydroxyacyl]-alpha-D-glucosamine + holo-[ACP] + H(+). The protein operates within bacterial outer membrane biogenesis; LPS lipid A biosynthesis. Catalyzes the N-acylation of UDP-3-O-acylglucosamine using 3-hydroxyacyl-ACP as the acyl donor. Is involved in the biosynthesis of lipid A, a phosphorylated glycolipid that anchors the lipopolysaccharide to the outer membrane of the cell. This chain is UDP-3-O-acylglucosamine N-acyltransferase, found in Porphyromonas gingivalis (strain ATCC 33277 / DSM 20709 / CIP 103683 / JCM 12257 / NCTC 11834 / 2561).